Reading from the N-terminus, the 271-residue chain is 5'-AMP-activated protein kinase subunit beta-2 (271 aa).

The tract at residues methionine 1–leucine 47 is disordered. The residue at position 38 (serine 38) is a Phosphoserine; by ULK1. A Phosphothreonine; by ULK1 modification is found at threonine 39. Serine 68 is subject to Phosphoserine; by ULK1. Residues serine 94 and serine 107 each carry the phosphoserine modification. Threonine 147 carries the post-translational modification Phosphothreonine. 2 positions are modified to phosphoserine: serine 157 and serine 169. Serine 173 is subject to Phosphoserine; by ULK1. Serine 183 is subject to Phosphoserine.

Belongs to the 5'-AMP-activated protein kinase beta subunit family. AMPK is a heterotrimer of an alpha catalytic subunit (PRKAA1 or PRKAA2), a beta (PRKAB1 or PRKAB2) and a gamma non-catalytic subunits (PRKAG1, PRKAG2 or PRKAG3). Phosphorylated when associated with the catalytic subunit (PRKAA1 or PRKAA2). Phosphorylated by ULK1 and ULK2; leading to negatively regulate AMPK activity and suggesting the existence of a regulatory feedback loop between ULK1, ULK2 and AMPK.

In terms of biological role, non-catalytic subunit of AMP-activated protein kinase (AMPK), an energy sensor protein kinase that plays a key role in regulating cellular energy metabolism. In response to reduction of intracellular ATP levels, AMPK activates energy-producing pathways and inhibits energy-consuming processes: inhibits protein, carbohydrate and lipid biosynthesis, as well as cell growth and proliferation. AMPK acts via direct phosphorylation of metabolic enzymes, and by longer-term effects via phosphorylation of transcription regulators. Also acts as a regulator of cellular polarity by remodeling the actin cytoskeleton; probably by indirectly activating myosin. Beta non-catalytic subunit acts as a scaffold on which the AMPK complex assembles, via its C-terminus that bridges alpha (PRKAA1 or PRKAA2) and gamma subunits (PRKAG1, PRKAG2 or PRKAG3). This is 5'-AMP-activated protein kinase subunit beta-2 (Prkab2) from Rattus norvegicus (Rat).